Reading from the N-terminus, the 204-residue chain is Large ribosomal subunit protein uL10 (204 aa).

A disordered region spans residues 170 to 204 (AADPSVIGGAGEASDQEPKTTETPEASAAQDNTNE). The span at 192–204 (TPEASAAQDNTNE) shows a compositional bias: polar residues.

Belongs to the universal ribosomal protein uL10 family. In terms of assembly, part of the ribosomal stalk of the 50S ribosomal subunit. The N-terminus interacts with L11 and the large rRNA to form the base of the stalk. The C-terminus forms an elongated spine to which L12 dimers bind in a sequential fashion forming a multimeric L10(L12)X complex.

Functionally, forms part of the ribosomal stalk, playing a central role in the interaction of the ribosome with GTP-bound translation factors. The chain is Large ribosomal subunit protein uL10 from Cutibacterium acnes (strain DSM 16379 / KPA171202) (Propionibacterium acnes).